We begin with the raw amino-acid sequence, 174 residues long: Dual-action ribosomal maturation protein DarP (174 aa).

The protein belongs to the DarP family.

The protein resides in the cytoplasm. Member of a network of 50S ribosomal subunit biogenesis factors which assembles along the 30S-50S interface, preventing incorrect 23S rRNA structures from forming. Promotes peptidyl transferase center (PTC) maturation. The polypeptide is Dual-action ribosomal maturation protein DarP (Pseudomonas aeruginosa (strain LESB58)).